Reading from the N-terminus, the 541-residue chain is Membrane protein insertase YidC (541 aa).

The next 6 helical transmembrane spans lie at 7-27 (FLIVAIFLSVFLLWDKWGVTH), 289-309 (YLLTVVNPELVIAPGAIVTLP), 356-376 (IIHSWGYSIITLTLLIKLAFY), 430-450 (LPILVQIPVFISLYWVLLEMV), 463-483 (LSAQDPYYILPLIMGVSMFAQ), and 498-518 (IMMALPFVFTIFFLWFPSGLV).

The protein belongs to the OXA1/ALB3/YidC family. Type 1 subfamily. Interacts with the Sec translocase complex via SecD. Specifically interacts with transmembrane segments of nascent integral membrane proteins during membrane integration.

The protein localises to the cell inner membrane. In terms of biological role, required for the insertion and/or proper folding and/or complex formation of integral membrane proteins into the membrane. Involved in integration of membrane proteins that insert both dependently and independently of the Sec translocase complex, as well as at least some lipoproteins. Aids folding of multispanning membrane proteins. The sequence is that of Membrane protein insertase YidC from Ruthia magnifica subsp. Calyptogena magnifica.